The following is a 206-amino-acid chain: Photosynthetic reaction center cytochrome c-551 (206 aa).

Transmembrane regions (helical) follow at residues 10 to 30, 49 to 69, and 76 to 96; these read IALA…VSFL, FMGW…LGKM, and KWFL…FFSL. Cys152, Cys155, His156, and Met182 together coordinate heme.

In terms of assembly, component of the photosynthetic reaction center. The reaction center interacts with the Fenna-Matthews-Olson (FMO, fmoA) complex. In terms of processing, binds 1 heme group per subunit.

The protein resides in the cell inner membrane. Its function is as follows. Monoheme cytochrome which is the immediate electron donor to P840 of the photosynthetic reaction center complex. The protein is Photosynthetic reaction center cytochrome c-551 (pscC) of Chlorobaculum parvum (strain DSM 263 / NCIMB 8327) (Chlorobium vibrioforme subsp. thiosulfatophilum).